The chain runs to 60 residues: Large ribosomal subunit protein uL30 (60 aa).

It belongs to the universal ribosomal protein uL30 family. In terms of assembly, part of the 50S ribosomal subunit.

The sequence is that of Large ribosomal subunit protein uL30 from Dehalococcoides mccartyi (strain CBDB1).